The primary structure comprises 496 residues: UDP-N-acetylmuramoylalanine--D-glutamate ligase (496 aa).

ATP is bound at residue 130–136 (GTNGKTT).

This sequence belongs to the MurCDEF family. As to quaternary structure, interacts with PknA. Phosphorylated by PknA.

The protein localises to the cytoplasm. It catalyses the reaction UDP-N-acetyl-alpha-D-muramoyl-L-alanine + D-glutamate + ATP = UDP-N-acetyl-alpha-D-muramoyl-L-alanyl-D-glutamate + ADP + phosphate + H(+). Its pathway is cell wall biogenesis; peptidoglycan biosynthesis. In terms of biological role, cell wall formation. Catalyzes the addition of glutamate to the nucleotide precursor UDP-N-acetylmuramoyl-L-alanine (UMA). The protein is UDP-N-acetylmuramoylalanine--D-glutamate ligase of Mycobacterium tuberculosis (strain ATCC 25177 / H37Ra).